The sequence spans 176 residues: Cystatin-related protein 2 (176 aa).

Positions 1-26 (MYKTLCGTQLLLAIFVLFLNFSHATA) are cleaved as a signal peptide. Positions 27-30 (KGTR) are excised as a propeptide. Asn71 carries N-linked (GlcNAc...) asparagine glycosylation. 2 disulfides stabilise this stretch: Cys129/Cys139 and Cys153/Cys173.

This sequence belongs to the cystatin family. In terms of tissue distribution, prostate.

This is Cystatin-related protein 2 (Crp2) from Rattus norvegicus (Rat).